We begin with the raw amino-acid sequence, 584 residues long: FAD-linked oxidoreductase OXR2 (584 aa).

The first 22 residues, 1-22 (MRSIISAFILSLNFCTQPLVRG), serve as a signal peptide directing secretion. N-linked (GlcNAc...) asparagine glycosylation is found at Asn-75, Asn-97, Asn-115, Asn-225, Asn-302, Asn-321, and Asn-507. Residues 128–310 (LGMLSEKYIA…LNATFKVEPV (183 aa)) enclose the FAD-binding PCMH-type domain.

It belongs to the oxygen-dependent FAD-linked oxidoreductase family. It depends on FAD as a cofactor.

It functions in the pathway secondary metabolite biosynthesis. Its function is as follows. FAD-linked oxidoreductase; part of the gene cluster that mediates the biosynthesis of a tyrosine-derived cytochalasan acting as a fungal signal recognized by resistant rice plants and leads to avirulence in Pi33 resistant rice cultivars. The first step in the pathway is catalyzed by the hybrid PKS-NRPS ACE1, assisted by the enoyl reductase RAP1, that are responsible for fusion of the tyrosine precursor and the polyketide backbone. The polyketide synthase module (PKS) of ACE1 is responsible for the synthesis of the polyketide backbone and the downstream nonribosomal peptide synthetase (NRPS) amidates the carboxyl end of the polyketide with the tyrosine precursor. Because ACE1 lacks a designated enoylreductase (ER) domain, the required activity is provided the enoyl reductase RAP1. Reduction by the hydrolyase ORFZ, followed by dehydration and intra-molecular Diels-Alder cyclization by the Diels-Alderase ORF3 then yield the required isoindolone-fused macrocycle. A number of oxidative steps catalyzed by the tailoring enzymes identified within the cluster, including cytochrome P450 monooxygenases CYP1 to CYP4, the FAD-linked oxidoreductase OXR2 and the short-chain dehydrogenase/reductase OXR1, are further required to afford the final cytochalasans that confer avirulence and which have still to be identified. The monooxygenase CYP1 has been shown to be a site-selective C-18 hydroxylase whereas the function of CYP3 is the site-selective epoxidation of the C-6/C-7 olefin that is present in some intermediate compounds. Finally, SYN2 and RAP2 are not required for avirulence in Pi33 resistant rice cultivars. This is FAD-linked oxidoreductase OXR2 from Pyricularia oryzae (strain 70-15 / ATCC MYA-4617 / FGSC 8958) (Rice blast fungus).